The chain runs to 370 residues: GMP synthase [glutamine-hydrolyzing] subunit B (370 aa).

In terms of domain architecture, GMPS ATP-PPase spans 3-189; that stretch reads FDPQKFVDEI…LGLPRDIYNR (187 aa). 29 to 35 is an ATP binding site; that stretch reads SGGVDST.

As to quaternary structure, heterodimer composed of a glutamine amidotransferase subunit (A) and a GMP-binding subunit (B).

The enzyme catalyses XMP + L-glutamine + ATP + H2O = GMP + L-glutamate + AMP + diphosphate + 2 H(+). Its pathway is purine metabolism; GMP biosynthesis; GMP from XMP (L-Gln route): step 1/1. In terms of biological role, catalyzes the synthesis of GMP from XMP. The protein is GMP synthase [glutamine-hydrolyzing] subunit B (guaAB) of Sulfurisphaera tokodaii (strain DSM 16993 / JCM 10545 / NBRC 100140 / 7) (Sulfolobus tokodaii).